The following is a 128-amino-acid chain: Iron-sulfur cluster insertion protein ErpA (128 aa).

Cys-56, Cys-120, and Cys-122 together coordinate iron-sulfur cluster.

This sequence belongs to the HesB/IscA family. Homodimer. The cofactor is iron-sulfur cluster.

In terms of biological role, required for insertion of 4Fe-4S clusters for at least IspG. This is Iron-sulfur cluster insertion protein ErpA from Xanthomonas euvesicatoria pv. vesicatoria (strain 85-10) (Xanthomonas campestris pv. vesicatoria).